Consider the following 175-residue polypeptide: Granulocyte colony-stimulating factor (175 aa).

2 disulfide bridges follow: Cys37-Cys43 and Cys65-Cys75. O-linked (GalNAc...) threonine glycosylation occurs at Thr134.

The protein belongs to the IL-6 superfamily. Monomer. Post-translationally, O-glycosylated.

Its subcellular location is the secreted. Granulocyte/macrophage colony-stimulating factors are cytokines that act in hematopoiesis by controlling the production, differentiation, and function of 2 related white cell populations of the blood, the granulocytes and the monocytes-macrophages. This CSF induces granulocytes. The polypeptide is Granulocyte colony-stimulating factor (CSF3) (Canis lupus familiaris (Dog)).